The primary structure comprises 286 residues: ATP phosphoribosyltransferase (286 aa).

It belongs to the ATP phosphoribosyltransferase family. Long subfamily. Requires Mg(2+) as cofactor.

It is found in the cytoplasm. The catalysed reaction is 1-(5-phospho-beta-D-ribosyl)-ATP + diphosphate = 5-phospho-alpha-D-ribose 1-diphosphate + ATP. Its pathway is amino-acid biosynthesis; L-histidine biosynthesis; L-histidine from 5-phospho-alpha-D-ribose 1-diphosphate: step 1/9. With respect to regulation, feedback inhibited by histidine. Its function is as follows. Catalyzes the condensation of ATP and 5-phosphoribose 1-diphosphate to form N'-(5'-phosphoribosyl)-ATP (PR-ATP). Has a crucial role in the pathway because the rate of histidine biosynthesis seems to be controlled primarily by regulation of HisG enzymatic activity. The polypeptide is ATP phosphoribosyltransferase (Arthrobacter sp. (strain FB24)).